The chain runs to 511 residues: Thioredoxin reductase 2, mitochondrial (511 aa).

The transit peptide at 1-21 (MAALRGAAARFRGRAPGGARG) directs the protein to the mitochondrion. Residue 29 to 58 (DLLVIGGGSGGLACAKEAAQLGKKVAVLDY) participates in FAD binding. A disulfide bridge links C74 with C79. N6-succinyllysine is present on K316. H484 serves as the catalytic Proton acceptor. A cross-link (cysteinyl-selenocysteine (Cys-Sec)) is located at residues 509–510 (CU). Position 510 (U510) is a non-standard amino acid, selenocysteine.

This sequence belongs to the class-I pyridine nucleotide-disulfide oxidoreductase family. In terms of assembly, homodimer. Requires FAD as cofactor.

The protein resides in the mitochondrion. It catalyses the reaction [thioredoxin]-dithiol + NADP(+) = [thioredoxin]-disulfide + NADPH + H(+). With respect to regulation, inhibited by 1-chloro-2,4-dinitrobenzene and by zinc, calcium, magnesium and Fe(2+) ions. Functionally, involved in the control of reactive oxygen species levels and the regulation of mitochondrial redox homeostasis. Maintains thioredoxin in a reduced state. May play a role in redox-regulated cell signaling. This is Thioredoxin reductase 2, mitochondrial (TXNRD2) from Bos taurus (Bovine).